The following is a 247-amino-acid chain: Large ribosomal subunit protein uL30 (247 aa).

Met-1 bears the N-acetylmethionine mark. 4 repeat units span residues 7 to 17 (KKKVPAVPETL), 18 to 29 (KKKRRNFAELKI), 30 to 41 (KRLRKKFAQKML), and 42 to 53 (RKARRKLIYEKA). The tract at residues 7–53 (KKKVPAVPETLKKKRRNFAELKIKRLRKKFAQKMLRKARRKLIYEKA) is 4 X 12 AA tandem repeats. At Thr-16 the chain carries Phosphothreonine. An N6-acetyllysine modification is found at Lys-123. Position 126 is an N6-succinyllysine (Lys-126). The residue at position 138 (Tyr-138) is a Phosphotyrosine.

The protein belongs to the universal ribosomal protein uL30 family. In terms of assembly, component of the large ribosomal subunit. Homodimer. Interacts with DHX33.

The protein localises to the cytoplasm. Functionally, component of the large ribosomal subunit. The ribosome is a large ribonucleoprotein complex responsible for the synthesis of proteins in the cell. Binds to G-rich structures in 28S rRNA and in mRNAs. Plays a regulatory role in the translation apparatus; inhibits cell-free translation of mRNAs. The polypeptide is Large ribosomal subunit protein uL30 (RPL7) (Macaca fascicularis (Crab-eating macaque)).